Reading from the N-terminus, the 351-residue chain is Protein RecA (351 aa).

Position 68–75 (68–75) interacts with ATP; the sequence is GPESSGKT.

Belongs to the RecA family.

The protein localises to the cytoplasm. Can catalyze the hydrolysis of ATP in the presence of single-stranded DNA, the ATP-dependent uptake of single-stranded DNA by duplex DNA, and the ATP-dependent hybridization of homologous single-stranded DNAs. It interacts with LexA causing its activation and leading to its autocatalytic cleavage. This Thermotoga neapolitana (strain ATCC 49049 / DSM 4359 / NBRC 107923 / NS-E) protein is Protein RecA.